A 223-amino-acid chain; its full sequence is MCATLMPEPIIFAIPKGRILDEALPLLARVGIEPAADFFDKKSRALVFGTNQSHISLIRVRAFDVATFVAHGAAQLGIVGSDVVDEFDYSELYAPVDLGIGHCRLSLAGPEGGAPPGLGESHIRVATKYPATTRRWFAAQGIQAECIKLNGAMEIAPKLGLASHIVDLVSTGRTLVENALAEQKIISEVSARLIVNRAAFKLNSAEVPALVERFRQAVGDAAA.

The protein belongs to the ATP phosphoribosyltransferase family. Short subfamily. Heteromultimer composed of HisG and HisZ subunits.

It localises to the cytoplasm. The catalysed reaction is 1-(5-phospho-beta-D-ribosyl)-ATP + diphosphate = 5-phospho-alpha-D-ribose 1-diphosphate + ATP. It participates in amino-acid biosynthesis; L-histidine biosynthesis; L-histidine from 5-phospho-alpha-D-ribose 1-diphosphate: step 1/9. Catalyzes the condensation of ATP and 5-phosphoribose 1-diphosphate to form N'-(5'-phosphoribosyl)-ATP (PR-ATP). Has a crucial role in the pathway because the rate of histidine biosynthesis seems to be controlled primarily by regulation of HisG enzymatic activity. This is ATP phosphoribosyltransferase from Sphingopyxis alaskensis (strain DSM 13593 / LMG 18877 / RB2256) (Sphingomonas alaskensis).